The sequence spans 228 residues: MIGIIGAMEEEVAILKDKLTDMNEISVAHVKFYRGKLNSKEVVLTQSGIGKVNAAISTTLIIEKFNPKLIINTGSAGALDESLSVGDMLISNDVVYHDVDATAFGYKLGQIPQMPLEFKSDQELLKSVETVINKKNYNAKIGQIVSGDSFIGSVDQRLTIKRQFPEAMAVEMEATAIAQTCHQFHVPFIVTRAVSDLANGKADISFEEFLGEAAKSSSSIVESLIKVL.

The active-site Proton acceptor is the Glu-11. Substrate contacts are provided by residues Gly-77, Ile-151, and 172 to 173; that span reads ME. The active-site Proton donor is Asp-196.

This sequence belongs to the PNP/UDP phosphorylase family. MtnN subfamily.

The catalysed reaction is S-adenosyl-L-homocysteine + H2O = S-(5-deoxy-D-ribos-5-yl)-L-homocysteine + adenine. It carries out the reaction S-methyl-5'-thioadenosine + H2O = 5-(methylsulfanyl)-D-ribose + adenine. It catalyses the reaction 5'-deoxyadenosine + H2O = 5-deoxy-D-ribose + adenine. Its pathway is amino-acid biosynthesis; L-methionine biosynthesis via salvage pathway; S-methyl-5-thio-alpha-D-ribose 1-phosphate from S-methyl-5'-thioadenosine (hydrolase route): step 1/2. In terms of biological role, catalyzes the irreversible cleavage of the glycosidic bond in both 5'-methylthioadenosine (MTA) and S-adenosylhomocysteine (SAH/AdoHcy) to adenine and the corresponding thioribose, 5'-methylthioribose and S-ribosylhomocysteine, respectively. Also cleaves 5'-deoxyadenosine, a toxic by-product of radical S-adenosylmethionine (SAM) enzymes, into 5-deoxyribose and adenine. The protein is 5'-methylthioadenosine/S-adenosylhomocysteine nucleosidase of Staphylococcus haemolyticus (strain JCSC1435).